The following is a 388-amino-acid chain: Carbamoyl phosphate synthase small chain (388 aa).

The interval 1-194 is CPSase; it reads MAQNPLSKPT…WPEGYARQEA (194 aa). Residues Ser53, Gly246, and Gly248 each contribute to the L-glutamine site. The Glutamine amidotransferase type-1 domain occupies 198 to 387; that stretch reads KVVAIDYGAK…AAAMDAQKAE (190 aa). Cys276 functions as the Nucleophile in the catalytic mechanism. Residues Leu277, Gln280, Asn318, Gly320, and Phe321 each coordinate L-glutamine. Residues His360 and Glu362 contribute to the active site.

It belongs to the CarA family. Composed of two chains; the small (or glutamine) chain promotes the hydrolysis of glutamine to ammonia, which is used by the large (or ammonia) chain to synthesize carbamoyl phosphate. Tetramer of heterodimers (alpha,beta)4.

The enzyme catalyses hydrogencarbonate + L-glutamine + 2 ATP + H2O = carbamoyl phosphate + L-glutamate + 2 ADP + phosphate + 2 H(+). The catalysed reaction is L-glutamine + H2O = L-glutamate + NH4(+). Its pathway is amino-acid biosynthesis; L-arginine biosynthesis; carbamoyl phosphate from bicarbonate: step 1/1. The protein operates within pyrimidine metabolism; UMP biosynthesis via de novo pathway; (S)-dihydroorotate from bicarbonate: step 1/3. Its function is as follows. Small subunit of the glutamine-dependent carbamoyl phosphate synthetase (CPSase). CPSase catalyzes the formation of carbamoyl phosphate from the ammonia moiety of glutamine, carbonate, and phosphate donated by ATP, constituting the first step of 2 biosynthetic pathways, one leading to arginine and/or urea and the other to pyrimidine nucleotides. The small subunit (glutamine amidotransferase) binds and cleaves glutamine to supply the large subunit with the substrate ammonia. In Ruegeria pomeroyi (strain ATCC 700808 / DSM 15171 / DSS-3) (Silicibacter pomeroyi), this protein is Carbamoyl phosphate synthase small chain.